The following is a 141-amino-acid chain: MAKKIAAQFRLLLPAGKATPAPPVGPALGQRGVNIMEFIKRFNAATASMGDVLVPVDVTVFADKSFTFEVRTPPASFLLKKAAKVEKGSGEPNKVTVGKVTRAQVEEIAKQKMKDLNTEDLEAAVRIIEGTARSMGIQVVD.

It belongs to the universal ribosomal protein uL11 family. As to quaternary structure, part of the ribosomal stalk of the 50S ribosomal subunit. Interacts with L10 and the large rRNA to form the base of the stalk. L10 forms an elongated spine to which L12 dimers bind in a sequential fashion forming a multimeric L10(L12)X complex. One or more lysine residues are methylated.

In terms of biological role, forms part of the ribosomal stalk which helps the ribosome interact with GTP-bound translation factors. The chain is Large ribosomal subunit protein uL11 from Coprothermobacter proteolyticus (strain ATCC 35245 / DSM 5265 / OCM 4 / BT).